A 60-amino-acid polypeptide reads, in one-letter code: Small ribosomal subunit protein eS31 (60 aa).

Zn(2+)-binding residues include Cys-24, Cys-27, Cys-42, and Cys-45. A C4-type zinc finger spans residues 24 to 45 (CPRCGPGVFMADHGNRYACGRC).

Belongs to the eukaryotic ribosomal protein eS31 family. In terms of assembly, part of the 30S ribosomal subunit. Requires Zn(2+) as cofactor.

The chain is Small ribosomal subunit protein eS31 from Methanopyrus kandleri (strain AV19 / DSM 6324 / JCM 9639 / NBRC 100938).